Consider the following 496-residue polypeptide: Acyltransferase M4 (496 aa).

Residue His163 is the Proton acceptor of the active site.

It belongs to the plant acyltransferase family. As to quaternary structure, monomer.

The protein operates within secondary metabolite biosynthesis. Acyltransferase; part of the gene cluster that mediates the biosynthesis of squalestatin S1 (SQS1, also known as zaragozic acid A), a heavily oxidized fungal polyketide that offers potent cholesterol lowering activity by targeting squalene synthase (SS). SQS1 is composed of a 2,8-dioxobicyclic[3.2.1]octane-3,4,5-tricarboxyclic acid core that is connected to two lipophilic polyketide arms. These initial steps feature the priming of an unusual benzoic acid starter unit onto the highly reducing polyketide synthase pks2, followed by oxaloacetate extension and product release to generate a tricarboxylic acid containing product. The phenylalanine ammonia lyase (PAL) M7 and the acyl-CoA ligase M9 are involved in transforming phenylalanine into benzoyl-CoA. The citrate synthase-like protein R3 is involved in connecting the C-alpha-carbons of the hexaketide chain and oxaloacetate to afford the tricarboxylic acid unit. The potential hydrolytic enzymes, M8 and M10, are in close proximity to pks2 and may participate in product release. On the other side, the tetraketide arm is synthesized by a the squalestatin tetraketide synthase pks1 and enzymatically esterified to the core in the last biosynthetic step, by the acetyltransferase M4. The biosynthesis of the tetraketide must involve 3 rounds of chain extension. After the first and second rounds methyl-transfer occurs, and in all rounds of extension the ketoreductase and dehydratase are active. The enoyl reductase and C-MeT of pks1 are not active in the final round of extension. The acetyltransferase M4 appears to have a broad substrate selectivity for its acyl CoA substrate, allowing the in vitro synthesis of novel squalestatins. The biosynthesis of SQS1 requires several oxidative steps likely performed by oxidoreductases M1, R1 and R2. Finally, in support of the identification of the cluster as being responsible for SQS1 production, the cluster contains a gene encoding a putative squalene synthase (SS) R6, suggesting a likely mechanism for self-resistance. This chain is Acyltransferase M4, found in Phoma sp. (strain ATCC 20986 / MF5453).